A 574-amino-acid chain; its full sequence is Interactor of HORMAD1 protein 1 (574 aa).

The disordered stretch occupies residues 113–133 (GLSKQFEEKKRRATDQSDSET). Residues 117 to 127 (QFEEKKRRATD) are compositionally biased toward basic and acidic residues. Residues 217–240 (MEMKSTLKNLEVLVVEQTKNLQQF) are a coiled coil. 3 disordered regions span residues 267-324 (GHLK…GVWD), 372-393 (FSNLPSQRAGNGQGLMAQGASQ), and 426-457 (TEQKGRPCRKRRRGKKQQPQRSKRGGLLDRKQ). The span at 272 to 284 (STSQTSPSLTQSL) shows a compositional bias: low complexity. The span at 372-381 (FSNLPSQRAG) shows a compositional bias: polar residues. Residues 431-449 (RPCRKRRRGKKQQPQRSKR) are compositionally biased toward basic residues. Phosphoserine is present on residues S476, S569, and S570.

In terms of assembly, part of the MCD recombinosome complex, at least composed of IHO1, REC114 and MEI4. Interacts with REC114. Interacts with MEI4. Interacts with HORMAD1. Interacts with ANKRD31. Detected in spermatocytes and testis (at protein level).

Its subcellular location is the chromosome. Functionally, required for DNA double-strand breaks (DSBs) formation in unsynapsed regions during meiotic recombination. Probably acts by forming a complex with MEI4 and REC114, which activates DSBs formation in unsynapsed regions, an essential step to ensure completion of synapsis. Not required for HORMAD1 functions in pairing-independent synaptonemal complex formation, ATR recruitment to unsynapsed axes, meiotic silencing of unsynapsed chromatin (MSUC) or meiotic surveillance. The sequence is that of Interactor of HORMAD1 protein 1 from Mus musculus (Mouse).